A 1031-amino-acid polypeptide reads, in one-letter code: Beta-galactosidase (1031 aa).

2 residues coordinate substrate: asparagine 100 and aspartate 198. Na(+) is bound at residue aspartate 198. Mg(2+) contacts are provided by glutamate 412, histidine 414, and glutamate 457. Substrate contacts are provided by residues glutamate 457 and 533-536 (EYAH). Glutamate 457 acts as the Proton donor in catalysis. Glutamate 533 acts as the Nucleophile in catalysis. Asparagine 593 contacts Mg(2+). Residues phenylalanine 597 and asparagine 600 each coordinate Na(+). Substrate contacts are provided by asparagine 600 and tryptophan 1005.

Belongs to the glycosyl hydrolase 2 family. Homotetramer. Mg(2+) is required as a cofactor. Na(+) serves as cofactor.

The enzyme catalyses Hydrolysis of terminal non-reducing beta-D-galactose residues in beta-D-galactosides.. The polypeptide is Beta-galactosidase (Vibrio vulnificus (strain YJ016)).